We begin with the raw amino-acid sequence, 236 residues long: Ribonuclease PH (236 aa).

Phosphate-binding positions include R86 and 124-126 (GTR).

This sequence belongs to the RNase PH family. In terms of assembly, homohexameric ring arranged as a trimer of dimers.

It carries out the reaction tRNA(n+1) + phosphate = tRNA(n) + a ribonucleoside 5'-diphosphate. Its function is as follows. Phosphorolytic 3'-5' exoribonuclease that plays an important role in tRNA 3'-end maturation. Removes nucleotide residues following the 3'-CCA terminus of tRNAs; can also add nucleotides to the ends of RNA molecules by using nucleoside diphosphates as substrates, but this may not be physiologically important. Probably plays a role in initiation of 16S rRNA degradation (leading to ribosome degradation) during starvation. The polypeptide is Ribonuclease PH (Thermodesulfovibrio yellowstonii (strain ATCC 51303 / DSM 11347 / YP87)).